We begin with the raw amino-acid sequence, 258 residues long: tRNA (guanine-N(7)-)-methyltransferase (258 aa).

The interval 1-42 (MPETPLMRDNGPVNHADQDAPAVPEEGQTKDSKGSRLHPRVT) is disordered. Residues E90, E115, D142, and D165 each contribute to the S-adenosyl-L-methionine site. The active site involves D165. Substrate-binding positions include K169, D201, and 235 to 238 (TKFE).

The protein belongs to the class I-like SAM-binding methyltransferase superfamily. TrmB family.

It catalyses the reaction guanosine(46) in tRNA + S-adenosyl-L-methionine = N(7)-methylguanosine(46) in tRNA + S-adenosyl-L-homocysteine. It participates in tRNA modification; N(7)-methylguanine-tRNA biosynthesis. Its function is as follows. Catalyzes the formation of N(7)-methylguanine at position 46 (m7G46) in tRNA. This Rhodococcus jostii (strain RHA1) protein is tRNA (guanine-N(7)-)-methyltransferase.